Reading from the N-terminus, the 278-residue chain is Beta-lactamase-like protein str5 (278 aa).

A helical transmembrane segment spans residues 20–37; that stretch reads VFVLAALLSATFAFFTHT. Asn-112 carries an N-linked (GlcNAc...) asparagine glycan.

The protein belongs to the beta-lactamase family.

Its subcellular location is the membrane. The protein operates within mycotoxin biosynthesis. Beta-lactamase-like protein; part of the gene cluster that mediates the biosynthesis of strobilurin A, an antifungal polyketide that contains a key beta-methoxyacrylate toxophore that targets the complex III of the mitochondrial electron transport chain. Strobilurin biosynthesis begins with construction of benzoyl CoA by step-wise elimination of ammonia from phenylalanine by the phenylalanine ammonia-lyase str11, oxygenation by str8 and retro-Claisen reaction to form benzoic acid, which is activated to its CoA thiolester benzoyl CoA by the dedicated CoA ligase str10. Benzoyl CoA forms the starter unit for the highly reducing polyketide synthase stpks1 that produces the polyketide prestrobilutin A. The FAD-dependent oxygenase str9 then catalyzes the key oxidative rearrangement responsible for the creation of the beta-methoxyacrylate toxophore. Str9 performs epoxidation of the 2,3 olefin of prestrobilutin A, followed by Meinwald rearrangement to furnish the aldehyde intermediate. Rapid enolization of the aldehyde intermediate would give the beta-methoxyacrylate skeleton and methylations catalyzed by str2 and str3 complete the synthesis and lead to the production of strobilurin A. The short-chain dehydrogenase stl2 and the dehydrogenase str4 play a role in the shunt pathway leading to the production of bolineol. The cluster encodes no obvious halogenase gene that could be involved in production of strobilurin B, nor any obvious dimethylallyl-transferase that could be involved in the production of strobilurin G. It is possible that unknown proteins encoded in, or near, the cluster (such as str1 or stl1) may form new classes of halogenases or dimethylally-transferases, or that the responsible genes are located elsewhere on the genome. Similarly, proteins encoded by str5/str6 hydrolases appear to have no chemical role in the biosynthesis of strobilurin A. Finally, no obvious self-resistance gene is found within the cluster. The chain is Beta-lactamase-like protein str5 from Strobilurus tenacellus.